Consider the following 499-residue polypeptide: Trichoplein keratin filament-binding protein (499 aa).

Coiled coils occupy residues 17-143 (LEQQ…LYEQ), 169-304 (EQIT…LSAL), and 405-485 (NRER…TQRG). Residues 260-426 (RKMEQCRKKT…RQFTSREKKQ (167 aa)) are trichohyalin/plectin homology domain.

It belongs to the TCHP family.

It localises to the cytoplasm. Its subcellular location is the cytoskeleton. The protein resides in the microtubule organizing center. The protein localises to the centrosome. In terms of biological role, may act as a 'capping' or 'branching' protein for keratin filaments in the cell periphery. May regulate K8/K18 filament and desmosome organization mainly at the apical or peripheral regions of simple epithelial cells. In Xenopus laevis (African clawed frog), this protein is Trichoplein keratin filament-binding protein.